The primary structure comprises 111 residues: Ribonuclease P protein component (111 aa).

Belongs to the RnpA family. Consists of a catalytic RNA component (M1 or rnpB) and a protein subunit.

It carries out the reaction Endonucleolytic cleavage of RNA, removing 5'-extranucleotides from tRNA precursor.. Functionally, RNaseP catalyzes the removal of the 5'-leader sequence from pre-tRNA to produce the mature 5'-terminus. It can also cleave other RNA substrates such as 4.5S RNA. The protein component plays an auxiliary but essential role in vivo by binding to the 5'-leader sequence and broadening the substrate specificity of the ribozyme. This Streptococcus thermophilus (strain ATCC BAA-491 / LMD-9) protein is Ribonuclease P protein component.